A 299-amino-acid polypeptide reads, in one-letter code: Cycloserine biosynthesis protein DcsG (299 aa).

Positions 92, 137, 144, 175, 176, and 178 each coordinate ATP. One can recognise an ATP-grasp domain in the interval 95–298 (LADLAAHGVP…FAQALAERLK (204 aa)). Active-site residues include Arg-220 and Arg-254. Glu-269 and Glu-271 together coordinate Mg(2+). Residue Glu-271 is part of the active site.

As to quaternary structure, monomer. Requires Mg(2+) as cofactor.

The catalysed reaction is O-ureido-D-serine + ATP + H2O + H(+) = D-cycloserine + NH4(+) + ADP + phosphate + CO2. Its function is as follows. Involved in the biosynthesis of the antibiotic D-cycloserine (DCS), a cyclic structural analog of D-alanine, used as an antitubercular agent. Catalyzes the synthesis of D-cycloserine from O-ureido-D-serine (D-OUS). It reacts with D-OUS, D-homocysteine and beta-aminooxy-D-alanine. The polypeptide is Cycloserine biosynthesis protein DcsG (Streptomyces lavendulae).